The primary structure comprises 347 residues: Phenylalanine--tRNA ligase alpha subunit (347 aa).

Residue Glu265 participates in Mg(2+) binding.

This sequence belongs to the class-II aminoacyl-tRNA synthetase family. Phe-tRNA synthetase alpha subunit type 1 subfamily. Tetramer of two alpha and two beta subunits. It depends on Mg(2+) as a cofactor.

It localises to the cytoplasm. It catalyses the reaction tRNA(Phe) + L-phenylalanine + ATP = L-phenylalanyl-tRNA(Phe) + AMP + diphosphate + H(+). In Mycolicibacterium vanbaalenii (strain DSM 7251 / JCM 13017 / BCRC 16820 / KCTC 9966 / NRRL B-24157 / PYR-1) (Mycobacterium vanbaalenii), this protein is Phenylalanine--tRNA ligase alpha subunit.